Consider the following 433-residue polypeptide: 3-phosphoshikimate 1-carboxyvinyltransferase (433 aa).

Residues lysine 23, serine 24, and arginine 28 each coordinate 3-phosphoshikimate. Lysine 23 provides a ligand contact to phosphoenolpyruvate. Phosphoenolpyruvate contacts are provided by glycine 95 and arginine 123. 6 residues coordinate 3-phosphoshikimate: serine 170, serine 171, glutamine 172, serine 198, aspartate 317, and lysine 344. Glutamine 172 contributes to the phosphoenolpyruvate binding site. Aspartate 317 acts as the Proton acceptor in catalysis. Phosphoenolpyruvate contacts are provided by arginine 348, arginine 391, and lysine 416.

It belongs to the EPSP synthase family. Monomer.

The protein localises to the cytoplasm. It catalyses the reaction 3-phosphoshikimate + phosphoenolpyruvate = 5-O-(1-carboxyvinyl)-3-phosphoshikimate + phosphate. It participates in metabolic intermediate biosynthesis; chorismate biosynthesis; chorismate from D-erythrose 4-phosphate and phosphoenolpyruvate: step 6/7. Catalyzes the transfer of the enolpyruvyl moiety of phosphoenolpyruvate (PEP) to the 5-hydroxyl of shikimate-3-phosphate (S3P) to produce enolpyruvyl shikimate-3-phosphate and inorganic phosphate. This is 3-phosphoshikimate 1-carboxyvinyltransferase from Neisseria meningitidis serogroup B (strain ATCC BAA-335 / MC58).